The chain runs to 280 residues: MGQKINPHGFRLGITTDWKSRWYADKQYADYVKEDVAIRRLLSTGLERAGIADVEIERTRDRVRVDIHTARPGIVIGRRGTEADRIRADLEKLTGKQVQLNILEVRNPESQAQLVAQGVAEQLSNRVAFRRAMRKAIQSAMRQPNVKGIRVQCSGRLGGAEMSRSEFYREGRVPLHTLRADIDYGLYEAKTTFGRIGVKVWIYKGDVVGGKRELAAAAPAGAERPRRERPSGTRPRRSGASGTTATGTEAGRAAASADESTAAGQPAEAAPAAEPQSTES.

The KH type-2 domain maps to 38 to 106 (IRRLLSTGLE…QVQLNILEVR (69 aa)). Positions 215-280 (AAAAPAGAER…PAAEPQSTES (66 aa)) are disordered. Low complexity predominate over residues 238–280 (SGASGTTATGTEAGRAAASADESTAAGQPAEAAPAAEPQSTES).

This sequence belongs to the universal ribosomal protein uS3 family. Part of the 30S ribosomal subunit. Forms a tight complex with proteins S10 and S14.

Its function is as follows. Binds the lower part of the 30S subunit head. Binds mRNA in the 70S ribosome, positioning it for translation. This chain is Small ribosomal subunit protein uS3, found in Mycobacterium avium (strain 104).